Consider the following 439-residue polypeptide: Tol-Pal system protein TolB (439 aa).

Positions 1–22 are cleaved as a signal peptide; the sequence is MKKPLRWLAALTVLLLPLSALA.

The protein belongs to the TolB family. The Tol-Pal system is composed of five core proteins: the inner membrane proteins TolA, TolQ and TolR, the periplasmic protein TolB and the outer membrane protein Pal. They form a network linking the inner and outer membranes and the peptidoglycan layer.

It localises to the periplasm. Part of the Tol-Pal system, which plays a role in outer membrane invagination during cell division and is important for maintaining outer membrane integrity. This chain is Tol-Pal system protein TolB, found in Xanthomonas oryzae pv. oryzae (strain KACC10331 / KXO85).